A 232-amino-acid polypeptide reads, in one-letter code: Phosphatidylserine decarboxylase proenzyme (232 aa).

Ser190 serves as the catalytic Schiff-base intermediate with substrate; via pyruvic acid. Position 190 is a pyruvic acid (Ser); by autocatalysis (Ser190).

This sequence belongs to the phosphatidylserine decarboxylase family. PSD-A subfamily. In terms of assembly, heterodimer of a large membrane-associated beta subunit and a small pyruvoyl-containing alpha subunit. Pyruvate is required as a cofactor. In terms of processing, is synthesized initially as an inactive proenzyme. Formation of the active enzyme involves a self-maturation process in which the active site pyruvoyl group is generated from an internal serine residue via an autocatalytic post-translational modification. Two non-identical subunits are generated from the proenzyme in this reaction, and the pyruvate is formed at the N-terminus of the alpha chain, which is derived from the carboxyl end of the proenzyme. The post-translation cleavage follows an unusual pathway, termed non-hydrolytic serinolysis, in which the side chain hydroxyl group of the serine supplies its oxygen atom to form the C-terminus of the beta chain, while the remainder of the serine residue undergoes an oxidative deamination to produce ammonia and the pyruvoyl prosthetic group on the alpha chain.

It is found in the cell membrane. The enzyme catalyses a 1,2-diacyl-sn-glycero-3-phospho-L-serine + H(+) = a 1,2-diacyl-sn-glycero-3-phosphoethanolamine + CO2. Its pathway is phospholipid metabolism; phosphatidylethanolamine biosynthesis; phosphatidylethanolamine from CDP-diacylglycerol: step 2/2. Its function is as follows. Catalyzes the formation of phosphatidylethanolamine (PtdEtn) from phosphatidylserine (PtdSer). This is Phosphatidylserine decarboxylase proenzyme from Brucella anthropi (strain ATCC 49188 / DSM 6882 / CCUG 24695 / JCM 21032 / LMG 3331 / NBRC 15819 / NCTC 12168 / Alc 37) (Ochrobactrum anthropi).